The primary structure comprises 202 residues: Small ribosomal subunit protein uS4c (202 aa).

The S4 RNA-binding domain maps to 90-158; it reads MRSDNVIFRL…ISKNIELYQK (69 aa).

It belongs to the universal ribosomal protein uS4 family. As to quaternary structure, part of the 30S ribosomal subunit. Contacts protein S5. The interaction surface between S4 and S5 is involved in control of translational fidelity.

It localises to the plastid. It is found in the chloroplast. One of the primary rRNA binding proteins, it binds directly to 16S rRNA where it nucleates assembly of the body of the 30S subunit. Its function is as follows. With S5 and S12 plays an important role in translational accuracy. This Exsertotheca crispa (Moss) protein is Small ribosomal subunit protein uS4c (rps4).